Reading from the N-terminus, the 279-residue chain is Tryptophan synthase alpha chain (279 aa).

Residues Glu-50 and Asp-61 each act as proton acceptor in the active site.

Belongs to the TrpA family. Tetramer of two alpha and two beta chains.

It carries out the reaction (1S,2R)-1-C-(indol-3-yl)glycerol 3-phosphate + L-serine = D-glyceraldehyde 3-phosphate + L-tryptophan + H2O. It functions in the pathway amino-acid biosynthesis; L-tryptophan biosynthesis; L-tryptophan from chorismate: step 5/5. The alpha subunit is responsible for the aldol cleavage of indoleglycerol phosphate to indole and glyceraldehyde 3-phosphate. The protein is Tryptophan synthase alpha chain of Rhizobium rhizogenes (strain K84 / ATCC BAA-868) (Agrobacterium radiobacter).